Reading from the N-terminus, the 437-residue chain is Phosphoglucosamine mutase (437 aa).

Ser93 acts as the Phosphoserine intermediate in catalysis. Mg(2+) is bound by residues Ser93, Asp230, Asp232, and Asp234. Phosphoserine is present on Ser93.

This sequence belongs to the phosphohexose mutase family. It depends on Mg(2+) as a cofactor. Post-translationally, activated by phosphorylation.

The enzyme catalyses alpha-D-glucosamine 1-phosphate = D-glucosamine 6-phosphate. Catalyzes the conversion of glucosamine-6-phosphate to glucosamine-1-phosphate. The polypeptide is Phosphoglucosamine mutase (Clavibacter michiganensis subsp. michiganensis (strain NCPPB 382)).